The chain runs to 152 residues: Succinate dehydrogenase [ubiquinone] cytochrome b small subunit A, mitochondrial (152 aa).

A mitochondrion-targeting transit peptide spans 1 to 21; that stretch reads MVTVLRLSSLCRANRASAFKS. Over 22 to 56 the chain is Mitochondrial matrix; sequence LLIRPVPCLSQDLHTVQTSQIHTSQNHHAASKAAS. Residues 57-78 form a helical membrane-spanning segment; it reads LHWTSERALSVALLGLLPAAYL. The Mitochondrial intermembrane portion of the chain corresponds to 79 to 83; that stretch reads YPGAA. The helical transmembrane segment at 84 to 104 threads the bilayer; that stretch reads VDYSLAAALTLHGHWGLGQVV. His-95 is a binding site for heme b. The Mitochondrial matrix portion of the chain corresponds to 105–113; the sequence is TDYVHGDAK. Tyr-107 serves as a coordination point for a ubiquinone. Residues 114 to 135 form a helical membrane-spanning segment; that stretch reads IKLANTSLFALSALTFAGLCYF. Residues 136–152 lie on the Mitochondrial intermembrane side of the membrane; the sequence is NYHDVGICKAVAMLWSL.

The protein belongs to the CybS family. As to quaternary structure, component of complex II composed of four subunits: the flavoprotein (FP) SDHA, iron-sulfur protein (IP) SDHB, and a cytochrome b560 composed of SDHC and SDHD.

It localises to the mitochondrion inner membrane. It participates in carbohydrate metabolism; tricarboxylic acid cycle. Its function is as follows. Membrane-anchoring subunit of succinate dehydrogenase (SDH) that is involved in complex II of the mitochondrial electron transport chain and is responsible for transferring electrons from succinate to ubiquinone (coenzyme Q). SDH also oxidizes malate to the non-canonical enol form of oxaloacetate, enol-oxaloacetate. Enol-oxaloacetate, which is a potent inhibitor of the succinate dehydrogenase activity, is further isomerized into keto-oxaloacetate. This Xenopus laevis (African clawed frog) protein is Succinate dehydrogenase [ubiquinone] cytochrome b small subunit A, mitochondrial (sdhd-a).